The primary structure comprises 557 residues: MGNHKAALTKQVFTFASELYAYGVREVVISPGSRSTPLALAFEAHPNIKTWIHPDERSAAFFAVGLIKGSERPVAILCTSGTAAANYTPAIAESQISRIPLIVLTSDRPHELRSVGAPQAINQVNMFNNYVSYEFDMPIADDSKETIDAIYYQMQIASQYLYGPHKGPIHFNLPFRDPLTPDLNATELLTSEMKILPHYQKSIDASALRHILNKKKGLIIVGDMQHQEVDQILTYSTIYDLPILADPLSHLRKFDHPNVICTYDLLFRSGLDLNVDFVIRVGKPVISKKLNQWLKKTDAFQILVQNNDKIDVFPIAPDISYEISANDFFRSLMEDTTVNRVSWLEKWQCLEKKGRKEIKCYLEQATDESAFVGELIKKTSEKDALFISNSMPIRDVDNLLLNKNIDVYANRGANGIDGIVSTALGMAVHKRITLLIGDLSFYHDMNGLLMSKLNNIQMNIVLLNNDGGGIFSYLPQKESATDYFERLFGTPTGLDFEYTAKLYQFDFKRFNSVSEFKNATLLSETSTIYELITNREDNFKQHQILYQKLSEMIHDTL.

This sequence belongs to the TPP enzyme family. MenD subfamily. In terms of assembly, homodimer. Requires Mg(2+) as cofactor. It depends on Mn(2+) as a cofactor. Thiamine diphosphate is required as a cofactor.

It carries out the reaction isochorismate + 2-oxoglutarate + H(+) = 5-enolpyruvoyl-6-hydroxy-2-succinyl-cyclohex-3-ene-1-carboxylate + CO2. The protein operates within quinol/quinone metabolism; 1,4-dihydroxy-2-naphthoate biosynthesis; 1,4-dihydroxy-2-naphthoate from chorismate: step 2/7. Its pathway is quinol/quinone metabolism; menaquinone biosynthesis. In terms of biological role, catalyzes the thiamine diphosphate-dependent decarboxylation of 2-oxoglutarate and the subsequent addition of the resulting succinic semialdehyde-thiamine pyrophosphate anion to isochorismate to yield 2-succinyl-5-enolpyruvyl-6-hydroxy-3-cyclohexene-1-carboxylate (SEPHCHC). In Staphylococcus aureus (strain USA300), this protein is 2-succinyl-5-enolpyruvyl-6-hydroxy-3-cyclohexene-1-carboxylate synthase.